Here is a 147-residue protein sequence, read N- to C-terminus: Large ribosomal subunit protein uL13 (147 aa).

Belongs to the universal ribosomal protein uL13 family. Part of the 50S ribosomal subunit.

Functionally, this protein is one of the early assembly proteins of the 50S ribosomal subunit, although it is not seen to bind rRNA by itself. It is important during the early stages of 50S assembly. In Nocardioides sp. (strain ATCC BAA-499 / JS614), this protein is Large ribosomal subunit protein uL13.